The primary structure comprises 225 residues: Enolase-phosphatase E1 (225 aa).

This sequence belongs to the HAD-like hydrolase superfamily. MasA/MtnC family. Monomer. Mg(2+) is required as a cofactor.

It catalyses the reaction 5-methylsulfanyl-2,3-dioxopentyl phosphate + H2O = 1,2-dihydroxy-5-(methylsulfanyl)pent-1-en-3-one + phosphate. The protein operates within amino-acid biosynthesis; L-methionine biosynthesis via salvage pathway; L-methionine from S-methyl-5-thio-alpha-D-ribose 1-phosphate: step 3/6. Its pathway is amino-acid biosynthesis; L-methionine biosynthesis via salvage pathway; L-methionine from S-methyl-5-thio-alpha-D-ribose 1-phosphate: step 4/6. Its function is as follows. Bifunctional enzyme that catalyzes the enolization of 2,3-diketo-5-methylthiopentyl-1-phosphate (DK-MTP-1-P) into the intermediate 2-hydroxy-3-keto-5-methylthiopentenyl-1-phosphate (HK-MTPenyl-1-P), which is then dephosphorylated to form the acireductone 1,2-dihydroxy-3-keto-5-methylthiopentene (DHK-MTPene). The chain is Enolase-phosphatase E1 from Shewanella loihica (strain ATCC BAA-1088 / PV-4).